Consider the following 1059-residue polypeptide: Carbamoyl phosphate synthase large chain (1059 aa).

Positions methionine 1–glutamate 401 are carboxyphosphate synthetic domain. ATP contacts are provided by arginine 129, arginine 169, glycine 175, glycine 176, arginine 208, isoleucine 210, glutamate 215, glycine 241, isoleucine 242, histidine 243, glutamine 284, and glutamate 298. The ATP-grasp 1 domain occupies lysine 133–valine 327. The Mg(2+) site is built by glutamine 284, glutamate 298, and asparagine 300. Mn(2+)-binding residues include glutamine 284, glutamate 298, and asparagine 300. Residues valine 402 to serine 546 are oligomerization domain. Residues valine 547–tyrosine 929 are carbamoyl phosphate synthetic domain. An ATP-grasp 2 domain is found at glutamate 671–leucine 861. 10 residues coordinate ATP: arginine 707, serine 746, isoleucine 748, glutamate 752, glycine 777, valine 778, histidine 779, serine 780, glutamine 820, and glutamate 832. Mg(2+)-binding residues include glutamine 820, glutamate 832, and asparagine 834. The Mn(2+) site is built by glutamine 820, glutamate 832, and asparagine 834. The MGS-like domain maps to leucine 930–isoleucine 1059. The segment at leucine 930 to isoleucine 1059 is allosteric domain.

Belongs to the CarB family. Composed of two chains; the small (or glutamine) chain promotes the hydrolysis of glutamine to ammonia, which is used by the large (or ammonia) chain to synthesize carbamoyl phosphate. Tetramer of heterodimers (alpha,beta)4. Mg(2+) serves as cofactor. The cofactor is Mn(2+).

The enzyme catalyses hydrogencarbonate + L-glutamine + 2 ATP + H2O = carbamoyl phosphate + L-glutamate + 2 ADP + phosphate + 2 H(+). It carries out the reaction hydrogencarbonate + NH4(+) + 2 ATP = carbamoyl phosphate + 2 ADP + phosphate + 2 H(+). It participates in amino-acid biosynthesis; L-arginine biosynthesis; carbamoyl phosphate from bicarbonate: step 1/1. Its pathway is pyrimidine metabolism; UMP biosynthesis via de novo pathway; (S)-dihydroorotate from bicarbonate: step 1/3. Functionally, large subunit of the glutamine-dependent carbamoyl phosphate synthetase (CPSase). CPSase catalyzes the formation of carbamoyl phosphate from the ammonia moiety of glutamine, carbonate, and phosphate donated by ATP, constituting the first step of 2 biosynthetic pathways, one leading to arginine and/or urea and the other to pyrimidine nucleotides. The large subunit (synthetase) binds the substrates ammonia (free or transferred from glutamine from the small subunit), hydrogencarbonate and ATP and carries out an ATP-coupled ligase reaction, activating hydrogencarbonate by forming carboxy phosphate which reacts with ammonia to form carbamoyl phosphate. This chain is Carbamoyl phosphate synthase large chain, found in Streptococcus gordonii (strain Challis / ATCC 35105 / BCRC 15272 / CH1 / DL1 / V288).